The following is a 911-amino-acid chain: Band 3 anion transport protein (911 aa).

M1 carries the N-acetylmethionine modification. Residues 1–26 are compositionally biased toward acidic residues; that stretch reads MEELQDDYEDMMEENLEQEEYEDPDI. The segment at 1-40 is disordered; that stretch reads MEELQDDYEDMMEENLEQEEYEDPDIPESQMEEPAAHDTE. Residues 1–403 lie on the Cytoplasmic side of the membrane; sequence MEELQDDYED…LSDITDAFSP (403 aa). Y8, Y21, and Y46 each carry phosphotyrosine. Positions 13–31 are (Microbial infection) Interaction with P.falciparum (isolate K1) FBPA; that stretch reads EENLEQEEYEDPDIPESQM. The interval 55–290 is globular; it reads HKVYVELQEL…LGRAAATLMS (236 aa). Residues 176 to 185 are interaction with ANK1; sequence AVLTRSGDPS. Residues S185 and S350 each carry the phosphoserine modification. The tract at residues 304 to 357 is dimerization arm; the sequence is RGELLHSLEGFLDCSLVLPPTDAPSEQALLSLVPVQRELLRRRYQSSPAKPDSS. Phosphotyrosine is present on Y359. A helical transmembrane segment spans residues 404–427; that stretch reads QVLAAVIFIYFAALSPAITFGGLL. The Extracellular portion of the chain corresponds to 428–435; sequence GEKTRNQM. Residues 436 to 456 form a helical membrane-spanning segment; it reads GVSELLISTAVQGILFALLGA. Residues 457 to 459 are Cytoplasmic-facing; that stretch reads QPL. A discontinuously helical transmembrane segment spans residues 460 to 476; sequence LVVGFSGPLLVFEEAFF. Residues 477-485 lie on the Extracellular side of the membrane; that stretch reads SFCETNGLE. Residues 486–506 form a helical membrane-spanning segment; that stretch reads YIVGRVWIGFWLILLVVLVVA. Residues 507-518 lie on the Cytoplasmic side of the membrane; the sequence is FEGSFLVRFISR. The chain crosses the membrane as a helical span at residues 519–541; it reads YTQEIFSFLISLIFIYETFSKLI. Residues 542–570 lie on the Extracellular side of the membrane; it reads KIFQDHPLQKTYNYNVLMVPKPQGPLPNT. Positions 559–630 are involved in anion transport; sequence MVPKPQGPLP…DFFIQDTYTQ (72 aa). The chain crosses the membrane as a helical span at residues 571–591; the sequence is ALLSLVLMAGTFFFAMMLRKF. Topologically, residues 592 to 602 are cytoplasmic; it reads KNSSYFPGKLR. Residues 603 to 623 form a helical membrane-spanning segment; it reads RVIGDFGVPISILIMVLVDFF. The Extracellular portion of the chain corresponds to 624–663; it reads IQDTYTQKLSVPDGFKVSNSSARGWVIHPLGLRSEFPIWM. The N-linked (GlcNAc...) (complex) asparagine glycan is linked to N642. A helical transmembrane segment spans residues 664-684; the sequence is MFASALPALLVFILIFLESQI. The Cytoplasmic portion of the chain corresponds to 685–700; sequence TTLIVSKPERKMVKGS. A helical transmembrane segment spans residues 701–719; the sequence is GFHLDLLLVVGMGGVAALF. The discontinuously helical transmembrane segment at 720–737 threads the bilayer; sequence GMPWLSATTVRSVTHANA. The (Microbial infection) 5ABC region; interaction with P.falciparum (isolate 3D7) MSP9 stretch occupies residues 720 to 761; it reads GMPWLSATTVRSVTHANALTVMGKASTPGAAAQIQEVKEQRI. The Cytoplasmic segment spans residues 738–760; sequence LTVMGKASTPGAAAQIQEVKEQR. The next 2 membrane-spanning stretches (helical) occupy residues 761-781 and 782-800; these read ISGL…PILS and RIPL…VTSL. Topologically, residues 801–838 are cytoplasmic; sequence SGIQLFDRILLLFKPPKYHPDVPYVKRVKTWRMHLFTG. The discontinuously helical intramembrane region spans 839-869; it reads IQIICLAVLWVVKSTPASLALPFVLILTVPL. C843 carries S-palmitoyl cysteine lipidation. Residues 870–911 are Cytoplasmic-facing; the sequence is RRVLLPLIFRNVELQCLDADDAKATFDEEEGRDEYDEVAMPV. Y904 bears the Phosphotyrosine mark.

The protein belongs to the anion exchanger (TC 2.A.31) family. In terms of assembly, a dimer in solution, but in its membrane environment, it exists primarily as a mixture of dimers and tetramers and spans the membrane asymmetrically. Component of the ankyrin-1 complex in the erythrocyte, composed of ANK1, RHCE, RHAG, SLC4A1, EPB42, GYPA, GYPB and AQP1. Interacts with STOM; this interaction positively regulates SLC4A1 activity. Interacts with GYPA; a GYPA monomer is bound at each end of the SLC4A1 dimer forming a heterotetramer. Three SLC4A1 dimers (Band 3-I, Band 3-II and Band 3-III) participates in the ankyrin-1 complex. Interacts (via the cytoplasmic domain) with EPB42; this interaction is mediated by the SLC4A1 Band 3-I dimer. Interacts (via the cytoplasmic domain) directly with ANK1; this interaction is mediated by the SLC4A1 Band 3-II and Band 3-III dimers. As to quaternary structure, interacts with TMEM139. (Microbial infection) Interacts (via N-terminus) with P.falciparum (isolate K1) aldolase FBPA; the interaction inhibits FBPA catalytic activity. In terms of assembly, (Microbial infection) Interacts (via the 5ABC region) with P.falciparum (isolate 3D7) MSP9/ABRA (via N-terminus). As to quaternary structure, (Microbial infection) Interacts (via the 5ABC region) with P.falciparum (isolate 3D7) MSP1 p42 subunit. Post-translationally, phosphorylated on Tyr-8 and Tyr-21 most likely by SYK. PP1-resistant phosphorylation that precedes Tyr-359 and Tyr-904 phosphorylation. Phosphorylated on Tyr-359 and Tyr-904 most likely by LYN. PP1-inhibited phosphorylation that follows Tyr-8 and Tyr-21 phosphorylation. In terms of processing, N-glycosylated. In terms of tissue distribution, detected in erythrocytes (at protein level). As to expression, expressed in kidney (at protein level).

It is found in the cell membrane. The protein localises to the basolateral cell membrane. The catalysed reaction is hydrogencarbonate(in) + chloride(out) = hydrogencarbonate(out) + chloride(in). Its activity is regulated as follows. Phenyl isothiocyanate inhibits anion transport in vitro. In terms of biological role, functions both as a transporter that mediates electroneutral anion exchange across the cell membrane and as a structural protein. Component of the ankyrin-1 complex of the erythrocyte membrane; required for normal flexibility and stability of the erythrocyte membrane and for normal erythrocyte shape via the interactions of its cytoplasmic domain with cytoskeletal proteins, glycolytic enzymes, and hemoglobin. Functions as a transporter that mediates the 1:1 exchange of inorganic anions across the erythrocyte membrane. Mediates chloride-bicarbonate exchange in the kidney, and is required for normal acidification of the urine. (Microbial infection) Acts as a receptor for P.falciparum (isolate 3D7) MSP9 and thus, facilitates merozoite invasion of erythrocytes. Acts as a receptor for P.falciparum (isolate 3D7) MSP1 and thus, facilitates merozoite invasion of erythrocytes. This chain is Band 3 anion transport protein, found in Homo sapiens (Human).